The sequence spans 309 residues: GTP cyclohydrolase MptA (309 aa).

It belongs to the GTP cyclohydrolase IV family. As to quaternary structure, homodimer. The cofactor is Fe(2+).

The catalysed reaction is GTP + H2O = 7,8-dihydroneopterin 2',3'-cyclic phosphate + formate + diphosphate + H(+). Its pathway is cofactor biosynthesis; 5,6,7,8-tetrahydromethanopterin biosynthesis. Converts GTP to 7,8-dihydro-D-neopterin 2',3'-cyclic phosphate, the first intermediate in the biosynthesis of coenzyme methanopterin. The chain is GTP cyclohydrolase MptA from Methanococcus aeolicus (strain ATCC BAA-1280 / DSM 17508 / OCM 812 / Nankai-3).